The primary structure comprises 75 residues: Small ribosomal subunit protein bS18 (75 aa).

It belongs to the bacterial ribosomal protein bS18 family. Part of the 30S ribosomal subunit. Forms a tight heterodimer with protein bS6.

Functionally, binds as a heterodimer with protein bS6 to the central domain of the 16S rRNA, where it helps stabilize the platform of the 30S subunit. In Methylobacillus flagellatus (strain ATCC 51484 / DSM 6875 / VKM B-1610 / KT), this protein is Small ribosomal subunit protein bS18.